An 874-amino-acid polypeptide reads, in one-letter code: Leucine--tRNA ligase (874 aa).

The 'HIGH' region motif lies at 43 to 53 (PYPSGRIHIGH). The segment at 614–634 (LDDGSPVTVGPPEKMSKSKKN) is disordered. A 'KMSKS' region motif is present at residues 627–631 (KMSKS). Lys630 provides a ligand contact to ATP.

Belongs to the class-I aminoacyl-tRNA synthetase family.

Its subcellular location is the cytoplasm. It carries out the reaction tRNA(Leu) + L-leucine + ATP = L-leucyl-tRNA(Leu) + AMP + diphosphate. The sequence is that of Leucine--tRNA ligase from Azorhizobium caulinodans (strain ATCC 43989 / DSM 5975 / JCM 20966 / LMG 6465 / NBRC 14845 / NCIMB 13405 / ORS 571).